We begin with the raw amino-acid sequence, 122 residues long: Large ribosomal subunit protein uL14 (122 aa).

The protein belongs to the universal ribosomal protein uL14 family. Part of the 50S ribosomal subunit. Forms a cluster with proteins L3 and L19. In the 70S ribosome, L14 and L19 interact and together make contacts with the 16S rRNA in bridges B5 and B8.

Binds to 23S rRNA. Forms part of two intersubunit bridges in the 70S ribosome. This is Large ribosomal subunit protein uL14 from Maridesulfovibrio salexigens (strain ATCC 14822 / DSM 2638 / NCIMB 8403 / VKM B-1763) (Desulfovibrio salexigens).